Consider the following 757-residue polypeptide: Dynamin-related protein DNM1 (757 aa).

The region spanning Thr25–Pro333 is the Dynamin-type G domain. A G1 motif region spans residues Gly35–Ser42. Residue Gly35–Ser42 participates in GTP binding. Residues Val61–Arg63 are G2 motif. Residues Asp175–Gly178 form a G3 motif region. GTP contacts are provided by residues Asp175 to Ile179 and Thr244 to Asp247. The tract at residues Thr244–Asp247 is G4 motif. The interval Val274–Ser277 is G5 motif. The disordered stretch occupies residues Ser557–Ala597. Low complexity predominate over residues Thr567 to Ile580. Ser629 is subject to Phosphoserine. Residues Cys670–Leu757 form the GED domain.

This sequence belongs to the TRAFAC class dynamin-like GTPase superfamily. Dynamin/Fzo/YdjA family. As to quaternary structure, interacts with FIS1 and MDV1.

Its subcellular location is the mitochondrion outer membrane. The catalysed reaction is GTP + H2O = GDP + phosphate + H(+). Microtubule-associated force-producing protein that participates mitochondrial fission. Fission of mitochondria occurs in many cell types and constitutes an important step in mitochondria morphology, which is balanced between fusion and fission. Functions antagonistically with FZO1. The protein is Dynamin-related protein DNM1 (DNM1) of Saccharomyces cerevisiae (strain ATCC 204508 / S288c) (Baker's yeast).